The primary structure comprises 625 residues: Basic helix-loop-helix ARNT-like protein 1 (625 aa).

The tract at residues 1 to 60 (MADQRMDISSTISDFMSPGPTDLLSSSLGTSGVDCNRKRKGSSTDYQESMDTDKDDPHGR) is disordered. At Ser-17 the chain carries Phosphoserine; by GSK3-beta. Over residues 17-32 (SPGPTDLLSSSLGTSG) the composition is skewed to low complexity. Phosphothreonine; by GSK3-beta is present on Thr-21. Positions 36–41 (NRKRKG) match the Nuclear localization signal motif. Residues 51 to 60 (DTDKDDPHGR) show a composition bias toward basic and acidic residues. One can recognise a bHLH domain in the interval 72-125 (NAREAHSQIEKRRRDKMNSFIDELASLVPTCNAMSRKLDKLTVLRMAVQHMKTL). Ser-78 is modified (phosphoserine). Residue Ser-90 is modified to Phosphoserine; by CK2. The short motif at 142 to 152 (LSDDELKHLIL) is the Nuclear export signal 1 element. The PAS 1 domain occupies 143–215 (SDDELKHLIL…EQLSSSDTAP (73 aa)). Lys-252 is covalently cross-linked (Glycyl lysine isopeptide (Lys-Gly) (interchain with G-Cter in SUMO2 and SUMO3)). Residue Lys-259 forms a Glycyl lysine isopeptide (Lys-Gly) (interchain with G-Cter in SUMO); alternate linkage. Lys-259 is covalently cross-linked (Glycyl lysine isopeptide (Lys-Gly) (interchain with G-Cter in SUMO2); alternate). The 71-residue stretch at 325–395 (PQPVNGEIRV…ECHRQVLQTR (71 aa)) folds into the PAS 2 domain. Residues 360-368 (LAYLPQELL) carry the Nuclear export signal 2 motif. One can recognise a PAC domain in the interval 400-443 (TNCYKFKIKDGSFITLRSRWFSFMNPWTKEVEYIVSTNTVVLAN). Disordered regions lie at residues 454 to 491 (QLTASPRSMDSMLPSGEGGPKRTHPTVPGIPGGTRAGA) and 510 to 594 (GSSP…SPSN). The interval 507–587 (RIRGSSPSSC…IGIDMIDNDQ (81 aa)) is interaction with CIART. Low complexity predominate over residues 510-520 (GSSPSSCGSSP). Position 537 is an N6-acetyllysine (Lys-537).

In terms of assembly, component of the circadian clock oscillator which includes the CRY1/2 proteins, CLOCK or NPAS2, BMAL1 or BMAL2, CSNK1D and/or CSNK1E, TIMELESS and the PER1/2/3 proteins. Forms a heterodimer with CLOCK. The CLOCK-BMAL1 heterodimer is required for E-box-dependent transactivation, for CLOCK nuclear translocation and degradation, and, for phosphorylation of both CLOCK and BMAL1. Part of a nuclear complex which also includes RACK1 and PRKCA; RACK1 and PRKCA are recruited to the complex in a circadian manner. Interacts with NPAS2. Interacts with EZH2. Interacts with SUMO3. Interacts with SIRT1. Interacts with AHR. Interacts with ID1, ID2 and ID3. Interacts with DDX4. Interacts with OGT. Interacts with EED and SUZ12. Interacts with MTA1. Interacts with CIART. Interacts with HSP90. Interacts with KAT2B and EP300. Interacts with BHLHE40/DEC1 and BHLHE41/DEC2. Interacts with RELB and the interaction is enhanced in the presence of CLOCK. Interacts with PER1, PER2, CRY1 and CRY2 and this interaction requires a translocation to the nucleus. Interaction of the CLOCK-BMAL1 heterodimer with PER or CRY inhibits transcription activation. Interaction of the CLOCK-BMAL1 with CRY1 is independent of DNA but with PER2 is off DNA. The CLOCK-BMAL1 heterodimer interacts with GSK3B. Interacts with KDM5A. Interacts with KMT2A; in a circadian manner. Interacts with UBE3A. Interacts with PRKCG. Interacts with MAGEL2. Interacts with NCOA2. Interacts with THRAP3. The CLOCK-BMAL1 heterodimer interacts with PASD1. Interacts with PASD1. Interacts with USP9X. Interacts with PIWIL2 (via PIWI domain). Interacts with HDAC3. Interacts with HNF4A. Ubiquitinated, leading to its proteasomal degradation. Deubiquitinated by USP9X. In terms of processing, O-glycosylated; contains O-GlcNAc. O-glycosylation by OGT prevents protein degradation by inhibiting ubiquitination. It also stabilizes the CLOCK-BMAL1 heterodimer thereby increasing CLOCK-BMAL1-mediated transcription of genes in the negative loop of the circadian clock such as PER1/2/3 and CRY1/2. Post-translationally, acetylated on Lys-537 by CLOCK during the repression phase of the circadian cycle. Acetylation facilitates recruitment of CRY1 protein and initiates the repression phase of the circadian cycle. Acetylated at Lys-537 by KAT5 during the activation phase of the cycle, leading to recruitment of the positive transcription elongation factor b (P-TEFb) and BRD4, followed by productive elongation of circadian transcripts. Deacetylated by SIRT1, which may result in decreased protein stability. Phosphorylated upon dimerization with CLOCK. Phosphorylation enhances the transcriptional activity, alters the subcellular localization and decreases the stability of the CLOCK-BMAL1 heterodimer by promoting its degradation. Phosphorylation shows circadian variations in the liver with a peak between CT10 to CT14. Phosphorylation at Ser-90 by CK2 is essential for its nuclear localization, its interaction with CLOCK and controls CLOCK nuclear entry. Dephosphorylation at Ser-78 is important for dimerization with CLOCK and transcriptional activity. In terms of processing, sumoylated on Lys-259 upon dimerization with CLOCK. Predominantly conjugated to poly-SUMO2/3 rather than SUMO1 and the level of these conjugates undergo rhythmic variation, peaking at CT9-CT12. Sumoylation localizes it exclusively to the PML body and promotes its ubiquitination in the PML body, ubiquitin-dependent proteasomal degradation and the transcriptional activity of the CLOCK-BMAL1 heterodimer. Post-translationally, undergoes lysosome-mediated degradation in a time-dependent manner in the liver.

It localises to the nucleus. It is found in the cytoplasm. The protein resides in the PML body. Transcriptional activator which forms a core component of the circadian clock. The circadian clock, an internal time-keeping system, regulates various physiological processes through the generation of approximately 24 hour circadian rhythms in gene expression, which are translated into rhythms in metabolism and behavior. It is derived from the Latin roots 'circa' (about) and 'diem' (day) and acts as an important regulator of a wide array of physiological functions including metabolism, sleep, body temperature, blood pressure, endocrine, immune, cardiovascular, and renal function. Consists of two major components: the central clock, residing in the suprachiasmatic nucleus (SCN) of the brain, and the peripheral clocks that are present in nearly every tissue and organ system. Both the central and peripheral clocks can be reset by environmental cues, also known as Zeitgebers (German for 'timegivers'). The predominant Zeitgeber for the central clock is light, which is sensed by retina and signals directly to the SCN. The central clock entrains the peripheral clocks through neuronal and hormonal signals, body temperature and feeding-related cues, aligning all clocks with the external light/dark cycle. Circadian rhythms allow an organism to achieve temporal homeostasis with its environment at the molecular level by regulating gene expression to create a peak of protein expression once every 24 hours to control when a particular physiological process is most active with respect to the solar day. Transcription and translation of core clock components (CLOCK, NPAS2, BMAL1, BMAL2, PER1, PER2, PER3, CRY1 and CRY2) plays a critical role in rhythm generation, whereas delays imposed by post-translational modifications (PTMs) are important for determining the period (tau) of the rhythms (tau refers to the period of a rhythm and is the length, in time, of one complete cycle). A diurnal rhythm is synchronized with the day/night cycle, while the ultradian and infradian rhythms have a period shorter and longer than 24 hours, respectively. Disruptions in the circadian rhythms contribute to the pathology of cardiovascular diseases, cancer, metabolic syndromes and aging. A transcription/translation feedback loop (TTFL) forms the core of the molecular circadian clock mechanism. Transcription factors, CLOCK or NPAS2 and BMAL1 or BMAL2, form the positive limb of the feedback loop, act in the form of a heterodimer and activate the transcription of core clock genes and clock-controlled genes (involved in key metabolic processes), harboring E-box elements (5'-CACGTG-3') within their promoters. The core clock genes: PER1/2/3 and CRY1/2 which are transcriptional repressors form the negative limb of the feedback loop and interact with the CLOCK|NPAS2-BMAL1|BMAL2 heterodimer inhibiting its activity and thereby negatively regulating their own expression. This heterodimer also activates nuclear receptors NR1D1/2 and RORA/B/G, which form a second feedback loop and which activate and repress BMAL1 transcription, respectively. BMAL1 positively regulates myogenesis and negatively regulates adipogenesis via the transcriptional control of the genes of the canonical Wnt signaling pathway. Plays a role in normal pancreatic beta-cell function; regulates glucose-stimulated insulin secretion via the regulation of antioxidant genes NFE2L2/NRF2 and its targets SESN2, PRDX3, CCLC and CCLM. Negatively regulates the mTORC1 signaling pathway; regulates the expression of MTOR and DEPTOR. Controls diurnal oscillations of Ly6C inflammatory monocytes; rhythmic recruitment of the PRC2 complex imparts diurnal variation to chemokine expression that is necessary to sustain Ly6C monocyte rhythms. Regulates the expression of HSD3B2, STAR, PTGS2, CYP11A1, CYP19A1 and LHCGR in the ovary and also the genes involved in hair growth. Plays an important role in adult hippocampal neurogenesis by regulating the timely entry of neural stem/progenitor cells (NSPCs) into the cell cycle and the number of cell divisions that take place prior to cell-cycle exit. Regulates the circadian expression of CIART and KLF11. The CLOCK-BMAL1 heterodimer regulates the circadian expression of SERPINE1/PAI1, VWF, B3, CCRN4L/NOC, NAMPT, DBP, MYOD1, PPARGC1A, PPARGC1B, SIRT1, GYS2, F7, NGFR, GNRHR, BHLHE40/DEC1, ATF4, MTA1, KLF10 and also genes implicated in glucose and lipid metabolism. Promotes rhythmic chromatin opening, regulating the DNA accessibility of other transcription factors. The NPAS2-BMAL1 heterodimer positively regulates the expression of MAOA, F7 and LDHA and modulates the circadian rhythm of daytime contrast sensitivity by regulating the rhythmic expression of adenylate cyclase type 1 (ADCY1) in the retina. The preferred binding motif for the CLOCK-BMAL1 heterodimer is 5'-CACGTGA-3', which contains a flanking adenine nucleotide at the 3-prime end of the canonical 6-nucleotide E-box sequence. CLOCK specifically binds to the half-site 5'-CAC-3', while BMAL1 binds to the half-site 5'-GTGA-3'. The CLOCK-BMAL1 heterodimer also recognizes the non-canonical E-box motifs 5'-AACGTGA-3' and 5'-CATGTGA-3'. Essential for the rhythmic interaction of CLOCK with ASS1 and plays a critical role in positively regulating CLOCK-mediated acetylation of ASS1. Plays a role in protecting against lethal sepsis by limiting the expression of immune checkpoint protein CD274 in macrophages in a PKM2-dependent manner. Regulates the diurnal rhythms of skeletal muscle metabolism via transcriptional activation of genes promoting triglyceride synthesis (DGAT2) and metabolic efficiency (COQ10B). The sequence is that of Basic helix-loop-helix ARNT-like protein 1 (BMAL1) from Pongo abelii (Sumatran orangutan).